The sequence spans 792 residues: Zinc finger CCCH domain-containing protein 11A (792 aa).

3 C3H1-type zinc fingers span residues 2–29 (PNQG…HCEA), 31–57 (LGNE…HMEI), and 60–87 (KRSE…HTRS). Disordered stretches follow at residues 103 to 191 (PTVP…VHNG), 223 to 331 (KKMK…KAGE), and 345 to 443 (ASQK…RSMQ). The residue at position 108 (Ser108) is a Phosphoserine. Residues Lys114 and Lys124 each participate in a glycyl lysine isopeptide (Lys-Gly) (interchain with G-Cter in SUMO2) cross-link. Polar residues predominate over residues 115–135 (TSQLTVQQSKLSVQSNPSPQL). Ser132 is modified (phosphoserine). Lys140 participates in a covalent cross-link: Glycyl lysine isopeptide (Lys-Gly) (interchain with G-Cter in SUMO2). A phosphoserine mark is found at Ser149, Ser171, and Ser289. A compositionally biased stretch (acidic residues) spans 160 to 175 (ADDDEDDDDQFSEEGD). 2 stretches are compositionally biased toward basic and acidic residues: residues 308-331 (KKVE…KAGE) and 345-360 (ASQK…KAEE). Residues 338-360 (EEILLERASQKRGELQTKLKAEE) adopt a coiled-coil conformation. Ser346 is modified (phosphoserine). Low complexity predominate over residues 367–376 (SPSGTKSSSS). 2 stretches are compositionally biased toward basic and acidic residues: residues 393 to 405 (QQEM…KKDT) and 431 to 443 (QPEE…RSMQ). A Glycyl lysine isopeptide (Lys-Gly) (interchain with G-Cter in SUMO2) cross-link involves residue Lys454. Disordered regions lie at residues 458–531 (ALRV…PTKL) and 545–571 (QRLQ…ASSY). A compositionally biased stretch (polar residues) spans 461 to 473 (VQQSSESSGNSRP). Composition is skewed to basic and acidic residues over residues 492-501 (GVKEEKKCGL) and 545-558 (QRLQ…KEKA). Residue Lys601 forms a Glycyl lysine isopeptide (Lys-Gly) (interchain with G-Cter in SUMO2) linkage. Residues 690-750 (LSEDKPVTMS…SASTGKPPLS (61 aa)) form a disordered region. A compositionally biased stretch (polar residues) spans 698–715 (MSETENPKDSSVLSSAQA). Residues 717-730 (SEPLLPEGSGPSSS) are compositionally biased toward low complexity.

As to quaternary structure, interacts with TREX complex components THOC2, DDX39 and POLDIP3; the interactions are ATP-dependent. Interacts with PABPN1; this interaction retains ZC3H11A in nuclear speckles. Interacts with KPNA3.

The protein resides in the nucleus speckle. Functionally, through its association with TREX complex components, may participate in the export and post-transcriptional coordination of selected mRNA transcripts, including those required to maintain the metabolic processes in embryonic cells. Binds RNA. The polypeptide is Zinc finger CCCH domain-containing protein 11A (Zc3h11a) (Mus musculus (Mouse)).